A 392-amino-acid chain; its full sequence is Ceramide synthase 5 (392 aa).

Residues 1 to 46 (MATAAQGPLSLLWGWLWSERFWLPENVSWADLEGPADGYGYPRGRH) are Lumenal-facing. Residue Asn26 is glycosylated (N-linked (GlcNAc...) asparagine). The helical transmembrane segment at 47 to 67 (ILSVFPLAAGIFFVRLLFERF) threads the bilayer. Positions 75-136 (CIGIEDSGPY…RHRRNQDKPP (62 aa)) are homeobox-like. The 202-residue stretch at 139-340 (TKFCESMWRF…IARIALKALI (202 aa)) folds into the TLC domain. Transmembrane regions (helical) follow at residues 148 to 168 (FTFYLCIFCYGIRFLWSSPWF), 183 to 203 (LSSGLYHYYIMELAFYWSLMF), 214 to 234 (FLIMFVHHLVTIGLISFSYIN), and 272 to 292 (LFVIFSAVFMVTRLGIYPFWI). The Last loop motif motif lies at 299–309 (ESWEIIGPYAS). A helical transmembrane segment spans residues 311-331 (WLLNGLLLTLQLLHVIWSYLI). Residues 332–392 (ARIALKALIR…HMGGSYWAEE (61 aa)) lie on the Cytoplasmic side of the membrane. The disordered stretch occupies residues 349-392 (RSDVESSSEEEDVTTCTKSPCDSSSSNGANRVNGHMGGSYWAEE). Residues 362-378 (TTCTKSPCDSSSSNGAN) show a composition bias toward polar residues.

As to quaternary structure, interacts with PAQR4; the interaction regulates the stability and activity of CERS5 and is inhibited in presence of ceramides. In terms of processing, phosphorylated at the C-terminus by CK2.

Its subcellular location is the endoplasmic reticulum membrane. The enzyme catalyses a sphingoid base + hexadecanoyl-CoA = an N-hexadecanoyl-sphingoid base + CoA + H(+). It carries out the reaction sphinganine + hexadecanoyl-CoA = N-hexadecanoylsphinganine + CoA + H(+). The catalysed reaction is hexadecasphinganine + hexadecanoyl-CoA = N-hexadecanoylhexadecasphinganine + CoA + H(+). It catalyses the reaction sphing-4-enine + hexadecanoyl-CoA = N-hexadecanoylsphing-4-enine + CoA + H(+). The enzyme catalyses 2-hydroxyhexadecanoyl-CoA + sphinganine = N-(2-hydroxyhexadecanoyl)-sphinganine + CoA + H(+). It carries out the reaction sphinganine + tetradecanoyl-CoA = N-(tetradecanoyl)-sphinganine + CoA + H(+). The catalysed reaction is sphinganine + octadecanoyl-CoA = N-(octadecanoyl)-sphinganine + CoA + H(+). It catalyses the reaction sphinganine + (9Z)-octadecenoyl-CoA = N-(9Z-octadecenoyl)-sphinganine + CoA + H(+). The enzyme catalyses a fatty acyl-CoA + sphing-4-enine = an N-acylsphing-4-enine + CoA + H(+). It functions in the pathway lipid metabolism; sphingolipid metabolism. Its activity is regulated as follows. Inhibited by fumonisin B1. Ceramide synthase that catalyzes the transfer of the acyl chain from acyl-CoA to a sphingoid base, with high selectivity toward palmitoyl-CoA (hexadecanoyl-CoA; C16:0-CoA). Can use other acyl donors, but with less efficiency. N-acylates sphinganine and sphingosine bases to form dihydroceramides and ceramides in de novo synthesis and salvage pathways, respectively. Plays a role in de novo ceramide synthesis and surfactant homeostasis in pulmonary epithelia. This Homo sapiens (Human) protein is Ceramide synthase 5.